Reading from the N-terminus, the 217-residue chain is PRELI domain-containing protein 1, mitochondrial (217 aa).

One can recognise a PRELI/MSF1 domain in the interval 36 to 174; the sequence is TEDIVHREVT…ILAKLQGEAP (139 aa).

In terms of assembly, forms a complex with TRIAP1 in the mitochondrion intermembrane space. Interacts with OPA1 and AIFM1. As to expression, abundantly expressed in all tissues tested except testis with highest levels in thymus.

The protein localises to the mitochondrion. It localises to the mitochondrion intermembrane space. It carries out the reaction a 1,2-diacyl-sn-glycero-3-phosphate(in) = a 1,2-diacyl-sn-glycero-3-phosphate(out). Involved in the modulation of the mitochondrial apoptotic pathway by ensuring the accumulation of cardiolipin (CL) in mitochondrial membranes. In vitro, the TRIAP1:PRELID1 complex mediates the transfer of phosphatidic acid (PA) between liposomes and probably functions as a PA transporter across the mitochondrion intermembrane space to provide PA for CL synthesis in the inner membrane. Regulates the mitochondrial apoptotic pathway in primary Th cells. Regulates Th cell differentiation by down-regulating STAT6 thereby reducing IL-4-induced Th2 cell number. May be important for the development of vital and immunocompetent organs. This is PRELI domain-containing protein 1, mitochondrial (Prelid1) from Mus musculus (Mouse).